The chain runs to 277 residues: Tryptophan synthase alpha chain (277 aa).

Active-site proton acceptor residues include Glu42 and Glu53.

The protein belongs to the TrpA family. As to quaternary structure, tetramer of two alpha and two beta chains.

It carries out the reaction (1S,2R)-1-C-(indol-3-yl)glycerol 3-phosphate + L-serine = D-glyceraldehyde 3-phosphate + L-tryptophan + H2O. It participates in amino-acid biosynthesis; L-tryptophan biosynthesis; L-tryptophan from chorismate: step 5/5. Its function is as follows. The alpha subunit is responsible for the aldol cleavage of indoleglycerol phosphate to indole and glyceraldehyde 3-phosphate. This Natronomonas pharaonis (strain ATCC 35678 / DSM 2160 / CIP 103997 / JCM 8858 / NBRC 14720 / NCIMB 2260 / Gabara) (Halobacterium pharaonis) protein is Tryptophan synthase alpha chain.